A 381-amino-acid polypeptide reads, in one-letter code: Succinyl-diaminopimelate desuccinylase (381 aa).

Residue His68 participates in Zn(2+) binding. Residue Asp70 is part of the active site. A Zn(2+)-binding site is contributed by Asp101. The active-site Proton acceptor is Glu135. 3 residues coordinate Zn(2+): Glu136, Glu164, and His350.

This sequence belongs to the peptidase M20A family. DapE subfamily. Homodimer. Zn(2+) serves as cofactor. Requires Co(2+) as cofactor.

The enzyme catalyses N-succinyl-(2S,6S)-2,6-diaminopimelate + H2O = (2S,6S)-2,6-diaminopimelate + succinate. Its pathway is amino-acid biosynthesis; L-lysine biosynthesis via DAP pathway; LL-2,6-diaminopimelate from (S)-tetrahydrodipicolinate (succinylase route): step 3/3. In terms of biological role, catalyzes the hydrolysis of N-succinyl-L,L-diaminopimelic acid (SDAP), forming succinate and LL-2,6-diaminopimelate (DAP), an intermediate involved in the bacterial biosynthesis of lysine and meso-diaminopimelic acid, an essential component of bacterial cell walls. This Neisseria gonorrhoeae (strain ATCC 700825 / FA 1090) protein is Succinyl-diaminopimelate desuccinylase.